The following is a 345-amino-acid chain: MSTPPPKLLRALAGETLERPPIWFMRQAGRSLPEYRELRSRAKDFIAFCLDPEMAAEATLQPMRRFPMDGAIVFADILLIPLALGQDVWFEAGEGPKLGELPPIEALRDQVEASTGRLSAVGETLARVRAELEPDRALIGFAGAPWTVATYMLERKGSEREAARAYAYAHPDELDALLDVLVDATARYLVMQAKAGAQALKLFESWAESLSEDVFERIVVRPHAAIVEKVRAAGVTVPIIGFPRGAGAQVETYAEGVPVEGIALDVQATAALGRRLQAQGRCIQGALDNLLLREGGPALDARVDQLLAQWGDGPWIFNLGHGVLPDTPIENIARVVSRVTGKPVR.

Substrate contacts are provided by residues 26 to 30, aspartate 76, tyrosine 151, serine 205, and histidine 321; that span reads RQAGR.

The protein belongs to the uroporphyrinogen decarboxylase family. As to quaternary structure, homodimer.

It localises to the cytoplasm. It carries out the reaction uroporphyrinogen III + 4 H(+) = coproporphyrinogen III + 4 CO2. The protein operates within porphyrin-containing compound metabolism; protoporphyrin-IX biosynthesis; coproporphyrinogen-III from 5-aminolevulinate: step 4/4. Catalyzes the decarboxylation of four acetate groups of uroporphyrinogen-III to yield coproporphyrinogen-III. This is Uroporphyrinogen decarboxylase from Phenylobacterium zucineum (strain HLK1).